The following is a 456-amino-acid chain: Argininosuccinate lyase (456 aa).

Belongs to the lyase 1 family. Argininosuccinate lyase subfamily.

Its subcellular location is the cytoplasm. It carries out the reaction 2-(N(omega)-L-arginino)succinate = fumarate + L-arginine. Its pathway is amino-acid biosynthesis; L-arginine biosynthesis; L-arginine from L-ornithine and carbamoyl phosphate: step 3/3. This Listeria monocytogenes serotype 4b (strain CLIP80459) protein is Argininosuccinate lyase.